Reading from the N-terminus, the 233-residue chain is B-cell lymphoma/leukemia 10 (233 aa).

N-acetylmethionine is present on Met1. The CARD domain occupies 13 to 101 (LTEVKKDALE…QSFLIQKITD (89 aa)). Glycyl lysine isopeptide (Lys-Gly) (interchain with G-Cter in ubiquitin) cross-links involve residues Lys17, Lys31, and Lys63. Ser138 carries the phosphoserine modification. The disordered stretch occupies residues 185–233 (SSFSSATLPRPGDPGAPPLPPDLRLEEGGSCGNSSEMFLPLRSRALSRQ). Over residues 195–205 (PGDPGAPPLPP) the composition is skewed to pro residues.

As to quaternary structure, homomultimer; homooligomerized following recruitment by CARD domain-containing proteins that form a nucleating helical template that recruits BCL10 via CARD-CARD interaction. Self-associates by CARD-CARD interaction and interacts with other CARD-proteins such as CARD9, CARD10, CARD11 and CARD14. Forms a complex with CARD14 and MALT1; resulting in the formation of a CBM (CARD14-BCL10-MALT1) complex. Forms a complex with CARD11 and MALT1; resulting in the formation of a CBM (CARD11-BCL10-MALT1) complex. Forms a complex with CARD9 and MALT1; resulting in the formation of a CBM (CARD9-BCL10-MALT1) complex. Found in a membrane raft complex, at least composed of BCL10, CARD11, DPP4 and IKBKB. Binds caspase-9 with its C-terminal domain. Interacts with TRAF2 and BIRC2/c-IAP2. Interacts with PELI2 and SOCS3; these interactions may be mutually exclusive. Post-translationally, phosphorylated by IKBKB/IKKB. Ubiquitinated via both 'Lys-63'-linked and linear ('Met-1'-linked) polyubiquitin chains in response to T-cell receptor (TCR) activation. Ubiquitination is recognized by IKBKG/NEMO, the regulatory subunit of I-kappa-B kinase (IKK), and is required for TCR-induced NF-kappa-B activation. Linear ubiquitination at Lys-17, Lys-31 and Lys-63 is mediated by RNF31/HOIP; linear ubiquitination is recognized with much higher affinity than 'Lys-63'-linked ubiquitin by IKBKG/NEMO. CARD11 is required for linear ubiquitination by HOIP by promoting the targeting of BCL10 to RNF31/HOIP. In terms of processing, proteolytically cleaved by MALT1; required for T-cell activation. Highly expressed in heart, brain, spleen, lung, liver, skeletal muscle, kidney and testis. Detected in developing brain, olfactory epithelium, tongue, whisker follicles, salivary gland, heart, lung, liver and intestinal epithelia of stage 15 embryos.

It localises to the cytoplasm. The protein localises to the membrane raft. In terms of biological role, plays a key role in both adaptive and innate immune signaling by bridging CARD domain-containing proteins to immune activation. Acts by channeling adaptive and innate immune signaling downstream of CARD domain-containing proteins CARD9, CARD11 and CARD14 to activate NF-kappa-B and MAP kinase p38 (MAPK11, MAPK12, MAPK13 and/or MAPK14) pathways which stimulate expression of genes encoding pro-inflammatory cytokines and chemokines. Recruited by activated CARD domain-containing proteins: homooligomerized CARD domain-containing proteins form a nucleating helical template that recruits BCL10 via CARD-CARD interaction, thereby promoting polymerization of BCL10, subsequent recruitment of MALT1 and formation of a CBM complex. This leads to activation of NF-kappa-B and MAP kinase p38 (MAPK11, MAPK12, MAPK13 and/or MAPK14) pathways which stimulate expression of genes encoding pro-inflammatory cytokines and chemokines. Activated by CARD9 downstream of C-type lectin receptors; CARD9-mediated signals are essential for antifungal immunity. Activated by CARD11 downstream of T-cell receptor (TCR) and B-cell receptor (BCR). Promotes apoptosis, pro-caspase-9 maturation and activation of NF-kappa-B via NIK and IKK. This chain is B-cell lymphoma/leukemia 10 (Bcl10), found in Mus musculus (Mouse).